Consider the following 295-residue polypeptide: Ubiquinol-cytochrome c reductase complex assembly factor 1 (295 aa).

The protein belongs to the CBP3 family. Interacts with UQCC2. Interacts with UQCC3. Forms a complex, named COMB/coordinator of mitochondrial CYTB biogenesis, composed of UQCC1, UQCC2, UQCC4, UQCC5 and UQCC6; stabilizes nascent cytochrome b/MT-CYB and promotes its membrane insertion. Forms a complex, named COMA, composed of UQCC1, UQCC2 and UQCC4; activates MT-CYB translation. Forms a complex, named COMC, composed of UQCC1, UQCC2; UQCC3 and UQCC4; mediates MT-CYB hemylation and association with the first nuclear-encoded CIII subunit UQCRQ. In the brain it is restricted to the olfactory bulb, the hippocampus, the piriform cortex and the Purkinje cells.

The protein localises to the mitochondrion inner membrane. Its subcellular location is the cytoplasmic vesicle. Its function is as follows. Required for the assembly of the ubiquinol-cytochrome c reductase complex (mitochondrial respiratory chain complex III or cytochrome b-c1 complex). Involved in cytochrome b translation and/or stability. The polypeptide is Ubiquinol-cytochrome c reductase complex assembly factor 1 (Uqcc1) (Mus musculus (Mouse)).